The sequence spans 283 residues: Spore coat polysaccharide biosynthesis protein SpsK (283 aa).

The protein belongs to the dTDP-4-dehydrorhamnose reductase family.

It functions in the pathway spore coat biogenesis; spore coat polysaccharide biosynthesis. In Bacillus subtilis (strain 168), this protein is Spore coat polysaccharide biosynthesis protein SpsK (spsK).